The primary structure comprises 783 residues: Rabenosyn-5 (783 aa).

An N-acetylalanine modification is found at A2. S3 is subject to Phosphoserine. Residues 14–37 (FLCPLCLKDLQSFYQLQSHYEEEH) form a C2H2-type zinc finger. Residues 99 to 262 (RSHLSDFKKH…HCKDKLLKRE (164 aa)) form a necessary for the correct targeting to endosomes region. The FYVE-type zinc-finger motif lies at 156 to 259 (DQDVPFCPDC…CCTHCKDKLL (104 aa)). Residues C162, C165, C178, C181, C186, and C189 each coordinate Zn(2+). Polar residues predominate over residues 206 to 223 (KDSLSTHTSPSQSPNSVH). The tract at residues 206-240 (KDSLSTHTSPSQSPNSVHGSRRGSISSMSSVSSVL) is disordered. 4 positions are modified to phosphoserine: S214, S218, S225, and S229. Over residues 227–239 (RGSISSMSSVSSV) the composition is skewed to low complexity. Residues C251 and C254 each coordinate Zn(2+). The segment at 263 to 499 (QQMDEKEHTP…QLQDEYDQQQ (237 aa)) is necessary for interaction with RAB4A. Residues 263-783 (QQMDEKEHTP…TLAKQKGAPN (521 aa)) are necessary for interaction with EHD1. Coiled-coil stretches lie at residues 377–412 (TKEQFEELKKKRKQDLEQKRTVERQAALESRRKLEE) and 471–531 (QAKA…ELER). 2 stretches are compositionally biased toward basic and acidic residues: residues 387–399 (KRKQDLEQKRTVE) and 405–414 (ESRRKLEERQ). The interval 387 to 433 (KRKQDLEQKRTVERQAALESRRKLEERQSGLASHTANGDVRSLRGIP) is disordered. The UIM domain maps to 495–514 (YDQQQTEKAIELSRKQAEEE). 2 disordered regions span residues 569 to 638 (SYSL…SPTE) and 663 to 733 (FEED…EEHI). 2 stretches are compositionally biased toward polar residues: residues 571–584 (SLDQDSSPVQSSTA) and 610–623 (TLPQSTMSQQSDKA). The segment at 627–783 (PFDEDDLSSP…TLAKQKGAPN (157 aa)) is necessary for interaction with RAB5A. Acidic residues predominate over residues 663 to 673 (FEEDAEEEEVA). S686 carries the post-translational modification Phosphoserine. Positions 721-733 (VDSDSGMEAEEHI) are enriched in acidic residues.

In terms of assembly, interacts with EHD1, RAB4A, RAB5A, RAB22A, RAB24 and VPS45. Binds simultaneously to RAB4A and RAB5A in vitro. Interacts with RAB4A and RAB5A that has been activated by GTP binding.

The protein resides in the cell membrane. It is found in the early endosome membrane. Functionally, rab4/Rab5 effector protein acting in early endocytic membrane fusion and membrane trafficking of recycling endosomes. Required for endosome fusion either homotypically or with clathrin coated vesicles. Plays a role in the lysosomal trafficking of CTSD/cathepsin D from the Golgi to lysosomes. Also promotes the recycling of transferrin directly from early endosomes to the plasma membrane. Binds phospholipid vesicles containing phosphatidylinositol 3-phosphate (PtdInsP3). Plays a role in the recycling of transferrin receptor to the plasma membrane. In Mus musculus (Mouse), this protein is Rabenosyn-5.